The chain runs to 436 residues: Trigger factor (436 aa).

The 86-residue stretch at 161-246 (DDQLNIDFVG…VNSVAEPKLP (86 aa)) folds into the PPIase FKBP-type domain.

The protein belongs to the FKBP-type PPIase family. Tig subfamily.

The protein localises to the cytoplasm. It carries out the reaction [protein]-peptidylproline (omega=180) = [protein]-peptidylproline (omega=0). Functionally, involved in protein export. Acts as a chaperone by maintaining the newly synthesized protein in an open conformation. Functions as a peptidyl-prolyl cis-trans isomerase. This is Trigger factor from Pseudomonas aeruginosa (strain LESB58).